The following is a 143-amino-acid chain: Large ribosomal subunit protein uL11 (143 aa).

Belongs to the universal ribosomal protein uL11 family. As to quaternary structure, part of the ribosomal stalk of the 50S ribosomal subunit. Interacts with L10 and the large rRNA to form the base of the stalk. L10 forms an elongated spine to which L12 dimers bind in a sequential fashion forming a multimeric L10(L12)X complex. In terms of processing, one or more lysine residues are methylated.

Functionally, forms part of the ribosomal stalk which helps the ribosome interact with GTP-bound translation factors. The chain is Large ribosomal subunit protein uL11 from Chromobacterium violaceum (strain ATCC 12472 / DSM 30191 / JCM 1249 / CCUG 213 / NBRC 12614 / NCIMB 9131 / NCTC 9757 / MK).